The following is a 321-amino-acid chain: Collectin-43 (321 aa).

A signal peptide spans 1–20; that stretch reads MLPLPLSILLLLTQSQSFLG. Residues 43–163 form a disordered region; the sequence is PADSLRGHDG…GEKGARGETS (121 aa). Basic and acidic residues predominate over residues 47-65; the sequence is LRGHDGRDGKEGPQGEKGD. The region spanning 49-162 is the Collagen-like domain; that stretch reads GHDGRDGKEG…PGEKGARGET (114 aa). Composition is skewed to gly residues over residues 100–109 and 124–133; these read GPEGGVGAPG and GTPGPGGAIG. Residues 147–159 show a composition bias toward basic and acidic residues; sequence KGDRGDPGEKGAR. The C-type lectin domain maps to 222-321; that stretch reads QLCREAKGQL…REERLVICEF (100 aa). 2 cysteine pairs are disulfide-bonded: C224-C319 and C297-C311.

It belongs to the SFTPD family. Oligomeric complex of 4 set of homotrimers. Post-translationally, hydroxylated. Liver specific.

It is found in the secreted. Functionally, lectin that binds to various sugars: mannose = ManNAc &gt; fucose &gt; GlcNAc &gt; glucose = maltose &gt; galactose &gt; lactose &gt; GalNAc. Could play a role in immune defense. The protein is Collectin-43 (CL43) of Bos taurus (Bovine).